A 160-amino-acid polypeptide reads, in one-letter code: Cathelin-related peptide SC5 (160 aa).

The N-terminal stretch at 1-29 is a signal peptide; it reads METQRASLSLGRCSLWLLLLGLALPSASA. Residues 30 to 131 constitute a propeptide that is removed on maturation; sequence QVLSYREAVL…DITCAEPQSV (102 aa). Cystine bridges form between C86/C97 and C108/C125.

This sequence belongs to the cathelicidin family.

The protein localises to the secreted. Its function is as follows. Broad spectrum bactericidal agent. The protein is Cathelin-related peptide SC5 of Ovis aries (Sheep).